The chain runs to 370 residues: Peptidyl-prolyl cis-trans isomerase D (370 aa).

Ser5 is subject to Phosphoserine. The PPIase cyclophilin-type domain maps to 19–183; sequence FFDVDIGGER…KLCVIAECGE (165 aa). Lys171 carries the N6-acetyllysine modification. The segment at 185-215 is chaperone activity; it reads KEGDDGGIFPKDGSGDSHPDFPEDADIDLKD. Ser198 bears the Phosphoserine mark. The tract at residues 214–370 is interaction with HSP90AB1; that stretch reads KDVDKILLIT…EKAVYAKMFA (157 aa). TPR repeat units follow at residues 223 to 256, 273 to 306, and 307 to 340; these read TEDL…VDSS, LSCV…DPSN, and TKAL…APED.

This sequence belongs to the cyclophilin-type PPIase family. PPIase D subfamily. As to quaternary structure, identified in ESR1 or NR3C1/GCR steroid receptor-chaperone complexes. Found in HSP90 chaperone complexes with kinase clients LCK or EIF2AK1. Two monomers associate with one HSP90 homodimer. Interacts with HSP90AA1. Interacts with HSP90AB1; PPID and FKBP4 compete for binding to HSP90AB1 and the interaction is mutually exclusive with the PPID:HSPA8 interaction. Interacts with HSPA8; PPID and STIP1 but not FKBP4 compete for binding to HSPA8 and the interaction is mutually exclusive with the PPID:HSP90AB1 interaction. Interacts with S100A1 and S100A2; the interactions dissociate the PPID:HSP90AA1 interaction. Interacts with S100A6. Interacts with MYB, ILF2, XRCC6, RACK1 and RPS3. Interacts with cytoplasmic dynein 1 intermediate chain (DYNC1I1 or DYNC1I2). As to expression, widely expressed.

The protein resides in the cytoplasm. Its subcellular location is the nucleus. It is found in the nucleolus. It localises to the nucleoplasm. The catalysed reaction is [protein]-peptidylproline (omega=180) = [protein]-peptidylproline (omega=0). With respect to regulation, less sensitive to inhibition by cyclosporin A than is CYP-18. In terms of biological role, PPIase that catalyzes the cis-trans isomerization of proline imidic peptide bonds in oligopeptides and may therefore assist protein folding. Proposed to act as a co-chaperone in HSP90 complexes such as in unligated steroid receptors heterocomplexes. Different co-chaperones seem to compete for association with HSP90 thus establishing distinct HSP90-co-chaperone-receptor complexes with the potential to exert tissue-specific receptor activity control. May have a preference for estrogen receptor complexes and is not found in glucocorticoid receptor complexes. May be involved in cytoplasmic dynein-dependent movement of the receptor from the cytoplasm to the nucleus. May regulate MYB by inhibiting its DNA-binding activity. Involved in regulation of AHR signaling by promoting the formation of the AHR:ARNT dimer; the function is independent of HSP90 but requires the chaperone activity. Involved in regulation of UV radiation-induced apoptosis. Promotes cell viability in anaplastic lymphoma kinase-positive anaplastic large-cell lymphoma (ALK+ ALCL) cell lines. Its function is as follows. (Microbial infection) May be involved in hepatitis C virus (HCV) replication and release. In Homo sapiens (Human), this protein is Peptidyl-prolyl cis-trans isomerase D.